The primary structure comprises 142 residues: Hemoglobin subunit pi (142 aa).

The Globin domain maps to 2-142 (TLTQAEKAAV…VSSVLTEKYR (141 aa)). Residues His-59 and His-88 each coordinate heme b.

Belongs to the globin family.

The pi' chain is the counterpart of the alpha chain in the major early embryonic hemoglobin P. The protein is Hemoglobin subunit pi of Cairina moschata (Muscovy duck).